The primary structure comprises 148 residues: Augurin (148 aa).

An N-terminal signal peptide occupies residues 1–31; that stretch reads MGTSSARPAVLALAGLALLLLLCLGPGDVSG. 2 propeptides span residues 32-68 and 133-148; these read NKLK…LKRA and SREG…YDDY.

This sequence belongs to the augurin family. As to expression, expressed in the brain, with expression in the choroid plexus and the ventricular ependymal cells (at protein level).

The protein resides in the secreted. Its subcellular location is the cytoplasm. It localises to the apical cell membrane. In terms of biological role, probable hormone that may attenuate cell proliferation and induce senescence of oligodendrocyte and neural precursor cells in the central nervous system. ECRG4-induced senescence is characterized by G1 arrest, RB1 dephosphorylation and accelerated CCND1 and CCND3 proteasomal degradation. This is Augurin from Rattus norvegicus (Rat).